The primary structure comprises 444 residues: tRNA (guanine-N(7)-)-methyltransferase non-catalytic subunit TRM82 (444 aa).

7 WD repeats span residues 1 to 47, 48 to 99, 100 to 147, 148 to 192, 193 to 237, 238 to 279, and 308 to 354; these read MSVI…WSDD, FDKI…LGAP, PIYS…KRFC, FSKR…EPIL, GHVS…DKWL, FGHK…STFD, and FAVS…ITFP. The segment at 55–92 is disordered; sequence RNTTAKEQQGQSSENENENKKLKSNKGDSIKRTAAKVP. Residues 71-85 are compositionally biased toward basic and acidic residues; sequence NENKKLKSNKGDSIK. Serine 93 is modified (phosphoserine).

Belongs to the WD repeat TRM82 family. As to quaternary structure, forms a heterodimer with the catalytic subunit TRM8.

The protein resides in the nucleus. Its pathway is tRNA modification; N(7)-methylguanine-tRNA biosynthesis. Functionally, required for the formation of N(7)-methylguanine at position 46 (m7G46) in tRNA, a modification required to maintain stability of tRNAs; its absence resulting in tRNA decay. In the complex, it is required to stabilize and induce conformational changes of the catalytic subunit. This is tRNA (guanine-N(7)-)-methyltransferase non-catalytic subunit TRM82 from Saccharomyces cerevisiae (strain ATCC 204508 / S288c) (Baker's yeast).